Here is a 784-residue protein sequence, read N- to C-terminus: LPS-assembly protein LptD (784 aa).

The signal sequence occupies residues 1-24 (MKKRIPTLLATMIASALYSHQGLA). Cystine bridges form between cysteine 31–cysteine 724 and cysteine 173–cysteine 725.

Belongs to the LptD family. As to quaternary structure, component of the lipopolysaccharide transport and assembly complex. Interacts with LptE and LptA. In terms of processing, contains two intramolecular disulfide bonds.

It is found in the cell outer membrane. Its function is as follows. Together with LptE, is involved in the assembly of lipopolysaccharide (LPS) at the surface of the outer membrane. The polypeptide is LPS-assembly protein LptD (Salmonella paratyphi A (strain ATCC 9150 / SARB42)).